Reading from the N-terminus, the 558-residue chain is Inositol-3-phosphate synthase 1 (558 aa).

Gly-67, Gly-68, Asn-69, Asn-70, Asp-141, Ser-177, Val-178, Gln-188, Arg-191, Thr-228, Ala-229, Asn-230, Thr-231, Gly-278, Ser-279, Asp-303, Ser-306, Asn-337, Asn-338, Asp-339, and Lys-352 together coordinate NAD(+). Ser-279 is modified (phosphoserine). Residue Ser-357 is modified to Phosphoserine. NAD(+) is bound by residues Gly-390, Asp-391, Asp-419, and Ser-420. The tract at residues 537 to 558 (ATNGCTGDANGHLQEEPPMPTT) is disordered.

Belongs to the myo-inositol 1-phosphate synthase family. NAD(+) is required as a cofactor. In terms of processing, phosphorylation at Ser-279 and Ser-357 may be associated with a decrease in activity. Highly expressed in testis, ovary, heart, placenta and pancreas. Weakly expressed in blood leukocyte, thymus, skeletal muscle and colon.

The protein localises to the cytoplasm. The catalysed reaction is D-glucose 6-phosphate = 1D-myo-inositol 3-phosphate. The protein operates within polyol metabolism; myo-inositol biosynthesis; myo-inositol from D-glucose 6-phosphate: step 1/2. With respect to regulation, inhibited by mood-stabilizing drugs such as valproate (VPA) and lithium. In terms of biological role, key enzyme in myo-inositol biosynthesis pathway that catalyzes the conversion of glucose 6-phosphate to 1-myo-inositol 1-phosphate in a NAD-dependent manner. Rate-limiting enzyme in the synthesis of all inositol-containing compounds. In Homo sapiens (Human), this protein is Inositol-3-phosphate synthase 1 (ISYNA1).